A 302-amino-acid polypeptide reads, in one-letter code: Protein KTI12 homolog (302 aa).

Residue 8 to 15 (GQPCSGKS) coordinates ATP. The segment at 260–273 (LRRTFVKLMGQSSL) is calmodulin-binding.

It belongs to the KTI12 family. Interacts with the elongator complex. Binds to calmodulin in a calcium-dependent manner. In terms of tissue distribution, expressed in roots, hypocotyls, cotyledons, shoot apices, stems, inflorescence apices, leaves and flowers.

It localises to the cytoplasm. The protein resides in the nucleus. Functionally, elongator complex-associated factor that is not a structural subunit but rather transiently contacts the complex. Regulates both meristem activity and organ growth; acts as a positive regulator of adaxial leaf patterning by modulating both cell division and differentiation. Required for an early step in synthesis of 5-carbamoylmethyl (ncm5) groups present on uridines (ncm5U) at the wobble position in tRNA. This Arabidopsis thaliana (Mouse-ear cress) protein is Protein KTI12 homolog.